Here is a 482-residue protein sequence, read N- to C-terminus: Aspartyl/glutamyl-tRNA(Asn/Gln) amidotransferase subunit B (482 aa).

Belongs to the GatB/GatE family. GatB subfamily. In terms of assembly, heterotrimer of A, B and C subunits.

It catalyses the reaction L-glutamyl-tRNA(Gln) + L-glutamine + ATP + H2O = L-glutaminyl-tRNA(Gln) + L-glutamate + ADP + phosphate + H(+). The catalysed reaction is L-aspartyl-tRNA(Asn) + L-glutamine + ATP + H2O = L-asparaginyl-tRNA(Asn) + L-glutamate + ADP + phosphate + 2 H(+). In terms of biological role, allows the formation of correctly charged Asn-tRNA(Asn) or Gln-tRNA(Gln) through the transamidation of misacylated Asp-tRNA(Asn) or Glu-tRNA(Gln) in organisms which lack either or both of asparaginyl-tRNA or glutaminyl-tRNA synthetases. The reaction takes place in the presence of glutamine and ATP through an activated phospho-Asp-tRNA(Asn) or phospho-Glu-tRNA(Gln). The sequence is that of Aspartyl/glutamyl-tRNA(Asn/Gln) amidotransferase subunit B from Ehrlichia canis (strain Jake).